A 107-amino-acid chain; its full sequence is Nucleoid-associated protein BLi00029/BL02358 (107 aa).

The tract at residues 1–27 (MRGGMGNMQKMMKQMQKMQKDMQKAQE) is disordered. Residues 8-17 (MQKMMKQMQK) are compositionally biased toward low complexity. A compositionally biased stretch (basic and acidic residues) spans 18-27 (MQKDMQKAQE).

This sequence belongs to the YbaB/EbfC family. In terms of assembly, homodimer.

The protein localises to the cytoplasm. It localises to the nucleoid. Functionally, binds to DNA and alters its conformation. May be involved in regulation of gene expression, nucleoid organization and DNA protection. The sequence is that of Nucleoid-associated protein BLi00029/BL02358 from Bacillus licheniformis (strain ATCC 14580 / DSM 13 / JCM 2505 / CCUG 7422 / NBRC 12200 / NCIMB 9375 / NCTC 10341 / NRRL NRS-1264 / Gibson 46).